A 566-amino-acid chain; its full sequence is Proline--tRNA ligase 1 (566 aa).

Belongs to the class-II aminoacyl-tRNA synthetase family. ProS type 1 subfamily. In terms of assembly, homodimer.

The protein resides in the cytoplasm. The catalysed reaction is tRNA(Pro) + L-proline + ATP = L-prolyl-tRNA(Pro) + AMP + diphosphate. Functionally, catalyzes the attachment of proline to tRNA(Pro) in a two-step reaction: proline is first activated by ATP to form Pro-AMP and then transferred to the acceptor end of tRNA(Pro). As ProRS can inadvertently accommodate and process non-cognate amino acids such as alanine and cysteine, to avoid such errors it has two additional distinct editing activities against alanine. One activity is designated as 'pretransfer' editing and involves the tRNA(Pro)-independent hydrolysis of activated Ala-AMP. The other activity is designated 'posttransfer' editing and involves deacylation of mischarged Ala-tRNA(Pro). The misacylated Cys-tRNA(Pro) is not edited by ProRS. The sequence is that of Proline--tRNA ligase 1 from Bacillus cereus (strain ZK / E33L).